The sequence spans 495 residues: Ubiquinone biosynthesis monooxygenase COQ6, mitochondrial (495 aa).

It belongs to the UbiH/COQ6 family. In terms of assembly, component of a multi-subunit COQ enzyme complex. FAD is required as a cofactor.

The protein localises to the mitochondrion inner membrane. The enzyme catalyses a 4-hydroxy-3-(all-trans-polyprenyl)benzoate + 2 reduced [2Fe-2S]-[ferredoxin] + O2 + 2 H(+) = a 3,4-dihydroxy-5-(all-trans-polyprenyl)benzoate + 2 oxidized [2Fe-2S]-[ferredoxin] + H2O. It catalyses the reaction a 2-methoxy-6-(all-trans-polyprenyl)phenol + 2 reduced [2Fe-2S]-[ferredoxin] + O2 + 2 H(+) = a 2-methoxy-6-(all-trans-polyprenyl)benzene-1,4-diol + 2 oxidized [2Fe-2S]-[ferredoxin] + H2O. Its pathway is cofactor biosynthesis; ubiquinone biosynthesis. FAD-dependent monooxygenase required for two non-consecutive steps during ubiquinone biosynthesis. Required for the C5-ring hydroxylation during ubiquinone biosynthesis by catalyzing the hydroxylation of 4-hydroxy-3-(all-trans-polyprenyl)benzoic acid to 3,4-dihydroxy-5-(all-trans-polyprenyl)benzoic acid. Also acts downstream of coq4, for the C1-hydroxylation during ubiquinone biosynthesis by catalyzing the hydroxylation of 2-methoxy-6-(all-trans-polyprenyl)phenol to 2-methoxy-6-(all-trans-polyprenyl)benzene-1,4-diol. The electrons required for the hydroxylation reaction are funneled indirectly to coq6 from NADPH via a ferredoxin/ferredoxin reductase system. This is Ubiquinone biosynthesis monooxygenase COQ6, mitochondrial from Dictyostelium discoideum (Social amoeba).